The following is a 466-amino-acid chain: Argininosuccinate lyase (466 aa).

It belongs to the lyase 1 family. Argininosuccinate lyase subfamily.

The protein resides in the cytoplasm. It catalyses the reaction 2-(N(omega)-L-arginino)succinate = fumarate + L-arginine. It functions in the pathway amino-acid biosynthesis; L-arginine biosynthesis; L-arginine from L-ornithine and carbamoyl phosphate: step 3/3. The sequence is that of Argininosuccinate lyase from Microcystis aeruginosa (strain NIES-843 / IAM M-2473).